Here is a 454-residue protein sequence, read N- to C-terminus: Bifunctional protein GlmU (454 aa).

The interval 1 to 232 (MTDRTCLSIV…VDNVIGINNR (232 aa)) is pyrophosphorylase. UDP-N-acetyl-alpha-D-glucosamine contacts are provided by residues 11-14 (LAAG), K25, Q78, and 83-84 (GT). Position 108 (D108) interacts with Mg(2+). The UDP-N-acetyl-alpha-D-glucosamine site is built by G144, E158, N173, and N230. N230 provides a ligand contact to Mg(2+). Positions 233-253 (VELAEAEAIWQQRKRREMMLA) are linker. An N-acetyltransferase region spans residues 254 to 454 (GVTLIAPETV…AIKAAKTATK (201 aa)). Positions 319 and 337 each coordinate UDP-N-acetyl-alpha-D-glucosamine. H349 (proton acceptor) is an active-site residue. Residues Y352 and N363 each contribute to the UDP-N-acetyl-alpha-D-glucosamine site. Acetyl-CoA-binding positions include A366, 372–373 (NY), S391, S409, and R426.

The protein in the N-terminal section; belongs to the N-acetylglucosamine-1-phosphate uridyltransferase family. In the C-terminal section; belongs to the transferase hexapeptide repeat family. In terms of assembly, homotrimer. The cofactor is Mg(2+).

The protein resides in the cytoplasm. It catalyses the reaction alpha-D-glucosamine 1-phosphate + acetyl-CoA = N-acetyl-alpha-D-glucosamine 1-phosphate + CoA + H(+). It carries out the reaction N-acetyl-alpha-D-glucosamine 1-phosphate + UTP + H(+) = UDP-N-acetyl-alpha-D-glucosamine + diphosphate. It participates in nucleotide-sugar biosynthesis; UDP-N-acetyl-alpha-D-glucosamine biosynthesis; N-acetyl-alpha-D-glucosamine 1-phosphate from alpha-D-glucosamine 6-phosphate (route II): step 2/2. It functions in the pathway nucleotide-sugar biosynthesis; UDP-N-acetyl-alpha-D-glucosamine biosynthesis; UDP-N-acetyl-alpha-D-glucosamine from N-acetyl-alpha-D-glucosamine 1-phosphate: step 1/1. The protein operates within bacterial outer membrane biogenesis; LPS lipid A biosynthesis. Catalyzes the last two sequential reactions in the de novo biosynthetic pathway for UDP-N-acetylglucosamine (UDP-GlcNAc). The C-terminal domain catalyzes the transfer of acetyl group from acetyl coenzyme A to glucosamine-1-phosphate (GlcN-1-P) to produce N-acetylglucosamine-1-phosphate (GlcNAc-1-P), which is converted into UDP-GlcNAc by the transfer of uridine 5-monophosphate (from uridine 5-triphosphate), a reaction catalyzed by the N-terminal domain. The chain is Bifunctional protein GlmU from Brucella anthropi (strain ATCC 49188 / DSM 6882 / CCUG 24695 / JCM 21032 / LMG 3331 / NBRC 15819 / NCTC 12168 / Alc 37) (Ochrobactrum anthropi).